We begin with the raw amino-acid sequence, 204 residues long: Transmembrane protein 253 (204 aa).

Transmembrane regions (helical) follow at residues 33–53, 62–82, 96–116, and 138–158; these read LVLA…TISV, LVTA…IITL, MMIS…IEVM, and LSAE…LFLL. The tract at residues 184–204 is disordered; it reads EEVSGLENGPVVASTGNRTDE.

It localises to the membrane. This is Transmembrane protein 253 (Tmem253) from Mus musculus (Mouse).